Reading from the N-terminus, the 326-residue chain is Thrombopoietin (326 aa).

Residues 1–21 form the signal peptide; that stretch reads MELTDLLLVAILLLTARLTLS. Disulfide bonds link C28–C172 and C50–C106. N-linked (GlcNAc...) asparagine glycosylation is found at N197, N206, N235, N249, and N256. Residues 307-326 are disordered; sequence FPPSPTFPTPGSPPQLPPVS. Pro residues predominate over residues 308–326; sequence PPSPTFPTPGSPPQLPPVS.

This sequence belongs to the EPO/TPO family.

Its subcellular location is the secreted. In terms of biological role, lineage-specific cytokine affecting the proliferation and maturation of megakaryocytes from their committed progenitor cells. It acts at a late stage of megakaryocyte development. It may be the major physiological regulator of circulating platelets. The polypeptide is Thrombopoietin (Thpo) (Rattus norvegicus (Rat)).